The sequence spans 481 residues: Protein FAM83E (481 aa).

The DUF1669 stretch occupies residues 1-296; sequence MAASQLAALE…LYAASRPLSA (296 aa). The tract at residues 351–481 is disordered; it reads KQETPTTTGP…ASGSGSGRRR (131 aa). Residues 371–385 are compositionally biased toward low complexity; it reads RTRTTSGPPTRPSRS. 2 stretches are compositionally biased toward polar residues: residues 391 to 400 and 465 to 474; these read RLSQLSGSSD and NATTSDWASG.

This sequence belongs to the FAM83 family. As to quaternary structure, directly interacts (via DUF1669) with CSNK1A1, CSNK1A1L, CSNK1D and CSNK1E. May interact with RAF1.

The protein resides in the cytoplasm. It localises to the perinuclear region. Its function is as follows. May play a role in MAPK signaling. The sequence is that of Protein FAM83E from Mus musculus (Mouse).